A 419-amino-acid polypeptide reads, in one-letter code: Serine hydroxymethyltransferase (419 aa).

(6S)-5,6,7,8-tetrahydrofolate contacts are provided by residues leucine 121 and 125–127; that span reads GHL. Lysine 230 is modified (N6-(pyridoxal phosphate)lysine). Residue 355–357 coordinates (6S)-5,6,7,8-tetrahydrofolate; it reads SPF.

The protein belongs to the SHMT family. Homodimer. Requires pyridoxal 5'-phosphate as cofactor.

The protein localises to the cytoplasm. It catalyses the reaction (6R)-5,10-methylene-5,6,7,8-tetrahydrofolate + glycine + H2O = (6S)-5,6,7,8-tetrahydrofolate + L-serine. Its pathway is one-carbon metabolism; tetrahydrofolate interconversion. The protein operates within amino-acid biosynthesis; glycine biosynthesis; glycine from L-serine: step 1/1. In terms of biological role, catalyzes the reversible interconversion of serine and glycine with tetrahydrofolate (THF) serving as the one-carbon carrier. This reaction serves as the major source of one-carbon groups required for the biosynthesis of purines, thymidylate, methionine, and other important biomolecules. Also exhibits THF-independent aldolase activity toward beta-hydroxyamino acids, producing glycine and aldehydes, via a retro-aldol mechanism. The polypeptide is Serine hydroxymethyltransferase (Streptococcus equi subsp. zooepidemicus (strain H70)).